Consider the following 504-residue polypeptide: Glucose-6-phosphate isomerase (504 aa).

Glutamate 333 acts as the Proton donor in catalysis. Residues histidine 364 and lysine 473 contribute to the active site.

This sequence belongs to the GPI family.

Its subcellular location is the cytoplasm. The enzyme catalyses alpha-D-glucose 6-phosphate = beta-D-fructose 6-phosphate. The protein operates within carbohydrate biosynthesis; gluconeogenesis. Its pathway is carbohydrate degradation; glycolysis; D-glyceraldehyde 3-phosphate and glycerone phosphate from D-glucose: step 2/4. Functionally, catalyzes the reversible isomerization of glucose-6-phosphate to fructose-6-phosphate. In Xanthomonas oryzae pv. oryzae (strain PXO99A), this protein is Glucose-6-phosphate isomerase.